We begin with the raw amino-acid sequence, 364 residues long: DNA replication and repair protein RecF (364 aa).

30–37 (GNNAQGKT) lines the ATP pocket.

This sequence belongs to the RecF family.

It localises to the cytoplasm. The RecF protein is involved in DNA metabolism; it is required for DNA replication and normal SOS inducibility. RecF binds preferentially to single-stranded, linear DNA. It also seems to bind ATP. The polypeptide is DNA replication and repair protein RecF (Clostridium botulinum (strain ATCC 19397 / Type A)).